Consider the following 364-residue polypeptide: 3-isopropylmalate dehydrogenase (364 aa).

77 to 90 (GPKWDNLPTDKRPE) lines the NAD(+) pocket. 4 residues coordinate substrate: R97, R107, R135, and D224. Residues D224, D248, and D252 each contribute to the Mg(2+) site. 281–293 (GSAPDIAGKGIAN) is a binding site for NAD(+).

It belongs to the isocitrate and isopropylmalate dehydrogenases family. LeuB type 1 subfamily. In terms of assembly, homodimer. The cofactor is Mg(2+). Requires Mn(2+) as cofactor.

The protein localises to the cytoplasm. It catalyses the reaction (2R,3S)-3-isopropylmalate + NAD(+) = 4-methyl-2-oxopentanoate + CO2 + NADH. It functions in the pathway amino-acid biosynthesis; L-leucine biosynthesis; L-leucine from 3-methyl-2-oxobutanoate: step 3/4. Its function is as follows. Catalyzes the oxidation of 3-carboxy-2-hydroxy-4-methylpentanoate (3-isopropylmalate) to 3-carboxy-4-methyl-2-oxopentanoate. The product decarboxylates to 4-methyl-2 oxopentanoate. The chain is 3-isopropylmalate dehydrogenase (leuB) from Aquifex aeolicus (strain VF5).